The primary structure comprises 932 residues: Protocadherin gamma-A7 (932 aa).

Residues 1–28 form the signal peptide; it reads MAAQPRGGDCRGFVLLSILLGTPWEAWA. 6 consecutive Cadherin domains span residues 29–133, 134–242, 243–347, 348–452, 453–562, and 570–682; these read GRIL…VPRF, LTEE…TPVF, SLPQ…APEV, TMTS…PPTF, PHSS…PPEI, and DGST…EPSD. Residues 29-692 are Extracellular-facing; it reads GRILYSVSEE…GPYNYDLTLY (664 aa). N-linked (GlcNAc...) asparagine glycans are attached at residues asparagine 419 and asparagine 545. The chain crosses the membrane as a helical span at residues 693-713; it reads LVVAVAAVSCVFLAFVLVLLA. Residues 714-932 lie on the Cytoplasmic side of the membrane; it reads LRLRRWHKSR…KKKSGKKEKK (219 aa). Disordered regions lie at residues 804–841 and 902–932; these read VPSI…WPNN and ATLT…KEKK. Residues 806–841 show a composition bias toward polar residues; sequence SIQQAPPNTDWRFSQAQRPGTSGSQNGDDTGTWPNN. Positions 922–932 are enriched in basic residues; sequence NKKKSGKKEKK.

The protein localises to the cell membrane. Potential calcium-dependent cell-adhesion protein. May be involved in the establishment and maintenance of specific neuronal connections in the brain. This chain is Protocadherin gamma-A7 (PCDHGA7), found in Pan troglodytes (Chimpanzee).